A 120-amino-acid chain; its full sequence is ATP-dependent Clp protease adapter protein ClpS (120 aa).

A disordered region spans residues 1 to 27 (MHAPSEIRLTFNQDRPQSNEDDGSGLA).

The protein belongs to the ClpS family. As to quaternary structure, binds to the N-terminal domain of the chaperone ClpA.

Its function is as follows. Involved in the modulation of the specificity of the ClpAP-mediated ATP-dependent protein degradation. The sequence is that of ATP-dependent Clp protease adapter protein ClpS from Pseudomonas putida (strain GB-1).